A 70-amino-acid chain; its full sequence is Melittin (70 aa).

The signal sequence occupies residues Met1–Ala21. Positions Ala22–Ala43 are cleaved as a propeptide — removed by a dipeptidylpeptidase. Gly44 carries the post-translational modification N-formylglycine; partial. Residue Gln69 is modified to Glutamine amide.

This sequence belongs to the melittin family. As to quaternary structure, monomer (in solution and for integration into membranes), homotetramer (in solution and potentially as a toroidal pore in membranes), and potenially homomultimer (as a toroidal pore in membranes). In terms of tissue distribution, expressed by the venom gland.

The protein localises to the secreted. It is found in the target cell membrane. Functionally, main toxin of bee venom with strong hemolytic activity and antimicrobial activity. It has enhancing effects on bee venom phospholipase A2 activity. This amphipathic toxin binds to negatively charged membrane surface and forms pore by inserting into lipid bilayers inducing the leakage of ions and molecules and the enhancement of permeability that ultimately leads to cell lysis. It acts as a voltage-gated pore with higher selectivity for anions over cations. The ion conductance has been shown to be voltage-dependent. Self-association of melittin in membranes is promoted by high ionic strength, but not by the presence of negatively charged lipids. In vivo, intradermal injection into healthy human volunteers produce sharp pain sensation and an inflammatory response. It produces pain by activating primary nociceptor cells directly and indirectly due to its ability to activate plasma membrane phospholipase A2 and its pore-forming activity. The protein is Melittin (MELT) of Polistes hebraeus (Paper wasp).